The chain runs to 380 residues: Glucose-1-phosphate adenylyltransferase (380 aa).

Alpha-D-glucose 1-phosphate contacts are provided by residues Gly-164, 179 to 180 (EK), and Ser-190.

Belongs to the bacterial/plant glucose-1-phosphate adenylyltransferase family. In terms of assembly, homotetramer.

It catalyses the reaction alpha-D-glucose 1-phosphate + ATP + H(+) = ADP-alpha-D-glucose + diphosphate. It functions in the pathway glycan biosynthesis; glycogen biosynthesis. Functionally, involved in the biosynthesis of ADP-glucose, a building block required for the elongation reactions to produce glycogen. Catalyzes the reaction between ATP and alpha-D-glucose 1-phosphate (G1P) to produce pyrophosphate and ADP-Glc. This Streptococcus pneumoniae (strain 70585) protein is Glucose-1-phosphate adenylyltransferase.